The sequence spans 213 residues: AN1-type zinc finger protein 5 (213 aa).

The segment at 8–42 (TPGPMLCSTGCGFYGNPRTNGMCSVCYKEHLQRQQ) adopts an A20-type zinc-finger fold. Residues Cys14, Cys18, Cys30, and Cys33 each contribute to the Zn(2+) site. Residues 39-149 (QRQQNSGRMS…EEKAPELPKP (111 aa)) form a disordered region. Residues 40–66 (RQQNSGRMSPMGTASGSNSPTSDSASV) show a composition bias toward polar residues. A phosphoserine mark is found at Ser48 and Ser58. Over residues 120-138 (SEPVVTQPSPSVSQPSSSQ) the composition is skewed to low complexity. Over residues 139–148 (SEEKAPELPK) the composition is skewed to basic and acidic residues. The segment at 148–194 (KPKKNRCFMCRKKVGLTGFDCRCGNLFCGLHRYSDKHNCPYDYKAEA) adopts an AN1-type zinc-finger fold. Residues Cys154, Cys157, Cys168, Cys170, Cys175, His178, His184, and Cys186 each coordinate Zn(2+). Lys209 bears the N6-acetyllysine mark.

As to quaternary structure, homooligomer and/or heterooligomer. Interacts (via A20-type domain) with IKBKG and RIPK1 and with TRAF6 (via AN1-type domain). Interacts with ubiquitin and polyubiquitinated proteins. Identified in a heterotrimeric complex with ubiquitin and SQSTM1, where ZFAND5 and SQSTM1 both interact with the same ubiquitin molecule.

It localises to the cytoplasm. Involved in protein degradation via the ubiquitin-proteasome system. May act by anchoring ubiquitinated proteins to the proteasome. Plays a role in ubiquitin-mediated protein degradation during muscle atrophy. Plays a role in the regulation of NF-kappa-B activation and apoptosis. Inhibits NF-kappa-B activation triggered by overexpression of RIPK1 and TRAF6 but not of RELA. Also inhibits tumor necrosis factor (TNF), IL-1 and TLR4-induced NF-kappa-B activation in a dose-dependent manner. Overexpression sensitizes cells to TNF-induced apoptosis. Is a potent inhibitory factor for osteoclast differentiation. This Rattus norvegicus (Rat) protein is AN1-type zinc finger protein 5 (Zfand5).